The chain runs to 98 residues: Co-chaperonin GroES (98 aa).

This sequence belongs to the GroES chaperonin family. Heptamer of 7 subunits arranged in a ring. Interacts with the chaperonin GroEL.

It is found in the cytoplasm. Its function is as follows. Together with the chaperonin GroEL, plays an essential role in assisting protein folding. The GroEL-GroES system forms a nano-cage that allows encapsulation of the non-native substrate proteins and provides a physical environment optimized to promote and accelerate protein folding. GroES binds to the apical surface of the GroEL ring, thereby capping the opening of the GroEL channel. The chain is Co-chaperonin GroES from Kineococcus radiotolerans (strain ATCC BAA-149 / DSM 14245 / SRS30216).